The sequence spans 163 residues: Transcriptional repressor NrdR (163 aa).

A zinc finger spans residues 3 to 34 (CVQCGHLEDKVIDSRMSKDGTTIRRRRVCLRC). The ATP-cone domain occupies 49 to 139 (LRVVKRDNLR…VYRQFSNVEE (91 aa)).

Belongs to the NrdR family. Zn(2+) is required as a cofactor.

In terms of biological role, negatively regulates transcription of bacterial ribonucleotide reductase nrd genes and operons by binding to NrdR-boxes. The polypeptide is Transcriptional repressor NrdR (Akkermansia muciniphila (strain ATCC BAA-835 / DSM 22959 / JCM 33894 / BCRC 81048 / CCUG 64013 / CIP 107961 / Muc)).